The following is a 348-amino-acid chain: Dihydroorotase (348 aa).

2 residues coordinate Zn(2+): H17 and H19. Residues 19–21 (HLR) and N45 each bind substrate. Positions 103, 140, and 178 each coordinate Zn(2+). Residue K103 is modified to N6-carboxylysine. Residue H140 coordinates substrate. L223 provides a ligand contact to substrate. D251 contacts Zn(2+). D251 is a catalytic residue. Substrate is bound by residues H255 and A267.

The protein belongs to the metallo-dependent hydrolases superfamily. DHOase family. Class II DHOase subfamily. Homodimer. It depends on Zn(2+) as a cofactor.

It catalyses the reaction (S)-dihydroorotate + H2O = N-carbamoyl-L-aspartate + H(+). It participates in pyrimidine metabolism; UMP biosynthesis via de novo pathway; (S)-dihydroorotate from bicarbonate: step 3/3. In terms of biological role, catalyzes the reversible cyclization of carbamoyl aspartate to dihydroorotate. The polypeptide is Dihydroorotase (Escherichia coli O6:K15:H31 (strain 536 / UPEC)).